The sequence spans 224 residues: ATP synthase subunit a (224 aa).

6 helical membrane passes run 17 to 37 (LSLN…IYWL), 72 to 92 (IFIS…FPYI), 99 to 119 (LTLT…YGWI), 125 to 145 (MFAH…MVCI), 155 to 175 (GTLA…LTLL), and 184 to 204 (YLLV…ESAV).

This sequence belongs to the ATPase A chain family. F-type ATPases have 2 components, CF(1) - the catalytic core - and CF(0) - the membrane proton channel. CF(1) has five subunits: alpha(3), beta(3), gamma(1), delta(1), epsilon(1). CF(0) has three main subunits: a, b and c.

It is found in the mitochondrion inner membrane. In terms of biological role, mitochondrial membrane ATP synthase (F(1)F(0) ATP synthase or Complex V) produces ATP from ADP in the presence of a proton gradient across the membrane which is generated by electron transport complexes of the respiratory chain. F-type ATPases consist of two structural domains, F(1) - containing the extramembraneous catalytic core and F(0) - containing the membrane proton channel, linked together by a central stalk and a peripheral stalk. During catalysis, ATP synthesis in the catalytic domain of F(1) is coupled via a rotary mechanism of the central stalk subunits to proton translocation. Key component of the proton channel; it may play a direct role in the translocation of protons across the membrane. The sequence is that of ATP synthase subunit a (mt:ATPase6) from Drosophila yakuba (Fruit fly).